The chain runs to 418 residues: Serine hydroxymethyltransferase (418 aa).

(6S)-5,6,7,8-tetrahydrofolate is bound by residues Leu-121 and 125–127 (GHL). Residue Lys-230 is modified to N6-(pyridoxal phosphate)lysine. (6S)-5,6,7,8-tetrahydrofolate-binding positions include Glu-246 and 355-357 (SPF).

The protein belongs to the SHMT family. In terms of assembly, homodimer. Pyridoxal 5'-phosphate serves as cofactor.

It localises to the cytoplasm. It catalyses the reaction (6R)-5,10-methylene-5,6,7,8-tetrahydrofolate + glycine + H2O = (6S)-5,6,7,8-tetrahydrofolate + L-serine. The protein operates within one-carbon metabolism; tetrahydrofolate interconversion. It participates in amino-acid biosynthesis; glycine biosynthesis; glycine from L-serine: step 1/1. In terms of biological role, catalyzes the reversible interconversion of serine and glycine with tetrahydrofolate (THF) serving as the one-carbon carrier. This reaction serves as the major source of one-carbon groups required for the biosynthesis of purines, thymidylate, methionine, and other important biomolecules. Also exhibits THF-independent aldolase activity toward beta-hydroxyamino acids, producing glycine and aldehydes, via a retro-aldol mechanism. The chain is Serine hydroxymethyltransferase from Streptococcus pneumoniae serotype 4 (strain ATCC BAA-334 / TIGR4).